A 32-amino-acid chain; its full sequence is Cytochrome b6-f complex subunit 7 (32 aa).

A helical transmembrane segment spans residues 5–25 (IFGTAAIFWVLIPIGLVGGAL).

This sequence belongs to the PetM family. The 4 large subunits of the cytochrome b6-f complex are cytochrome b6, subunit IV (17 kDa polypeptide, PetD), cytochrome f and the Rieske protein, while the 4 small subunits are PetG, PetL, PetM and PetN. The complex functions as a dimer.

Its subcellular location is the cellular thylakoid membrane. In terms of biological role, component of the cytochrome b6-f complex, which mediates electron transfer between photosystem II (PSII) and photosystem I (PSI), cyclic electron flow around PSI, and state transitions. The chain is Cytochrome b6-f complex subunit 7 from Synechococcus sp. (strain CC9902).